The sequence spans 587 residues: Kelch-like protein 3 (587 aa).

Residue serine 10 is modified to Phosphoserine. Residues 50–117 enclose the BTB domain; sequence CDVMIVAEDV…IYTAEIEVTE (68 aa). Residues 152 to 254 form the BACK domain; sequence CLGIRAFADV…PRDYLVQTVE (103 aa). Threonine 295 is modified (phosphothreonine). Kelch repeat units follow at residues 302 to 347, 348 to 394, 396 to 441, 442 to 490, 491 to 537, and 539 to 585; these read VMIV…FMAG, HVYA…VLND, LYAV…VVEG, KLYA…VLSG, QLYA…AVNG, and LYVV…VIHK. Phosphothreonine is present on threonine 375. Position 376 is a phosphoserine (serine 376). Serine 433 carries the post-translational modification Phosphoserine; by PKA and PKC.

Belongs to the KLHL3 family. In terms of assembly, homodimer. Component of the BCR(KLHL3) E3 ubiquitin ligase complex, at least composed of CUL3 and KLHL3 and RBX1. Interacts with CLDN8. Phosphorylation at Ser-433 by PKA or PKC decreases the interaction with WNK1 and WNK4, leading to inhibit their degradation by the BCR(KLHL3) complex. Phosphorylated at Ser-433 by PKC in response to angiotensin II signaling, decreasing ability to promote degradation of WNK1 and WNK4, leading to activation of Na-Cl cotransporter SLC12A3/NCC. Phosphorylation at Ser-433 is increased by insulin. Dephosphorylated at Ser-433 by calcineurin PPP3CA, promoting degradation of WNK1 and WNK4. In terms of tissue distribution, widely expressed.

The protein localises to the cytoplasm. The protein resides in the cytosol. It localises to the cytoskeleton. Its pathway is protein modification; protein ubiquitination. Substrate-specific adapter of a BCR (BTB-CUL3-RBX1) E3 ubiquitin ligase complex that acts as a regulator of ion transport in the distal nephron. The BCR(KLHL3) complex acts by mediating ubiquitination and degradation of WNK1 and WNK4, two activators of Na-Cl cotransporter SLC12A3/NCC in distal convoluted tubule cells of kidney, thereby regulating NaCl reabsorption. The BCR(KLHL3) complex also mediates ubiquitination and degradation of WNK3. The BCR(KLHL3) complex also mediates ubiquitination of CLDN8, a tight-junction protein required for paracellular chloride transport in the kidney, leading to its degradation. The chain is Kelch-like protein 3 from Homo sapiens (Human).